Here is a 268-residue protein sequence, read N- to C-terminus: UPF0328 protein ECU03_0040 (268 aa).

It belongs to the UPF0328 family.

This Encephalitozoon cuniculi (strain GB-M1) (Microsporidian parasite) protein is UPF0328 protein ECU03_0040.